The following is a 354-amino-acid chain: MNRGSLCPNPICLPPLEQSISKFLTQSGTFKDGDLRVNKDGIQTVSLSEPGAPPPIEPLDNQLSLADLEVIKVIGKGSSGNVQLVKHKLTQQFFALKVIQLNTEESTCRAISQELRINLSSQCPYLVSCYQSFYHNGLVSIILEFMDGGSLADLLKKVGKVPENMLSAICKRVLRGLCYIHHERRIIHRDLKPSNLLINHRGEVKITDFGVSKILTSTSSLANSFVGTYPYMSPERISGSLYSNKSDIWSLGLVLLECATGKFPYTPPEHKKGWSSVYELVDAIVENPPPCAPSNLFSPEFCSFISQCVQKDPRDRKSAKELLEHKFVKMFEDSDTNLSAYFTDAGSLIPPLAN.

One can recognise a Protein kinase domain in the interval 68 to 328 (LEVIKVIGKG…AKELLEHKFV (261 aa)). ATP-binding positions include 74 to 82 (IGKGSSGNV) and lysine 97. Aspartate 190 functions as the Proton acceptor in the catalytic mechanism. Residue threonine 218 is modified to Phosphothreonine. Serine 224 is modified (phosphoserine). The residue at position 228 (threonine 228) is a Phosphothreonine.

It belongs to the protein kinase superfamily. STE Ser/Thr protein kinase family. MAP kinase kinase subfamily. Interacts with MEKK1 and MPK4. May form a ternary complex composed of MEKK1 and MKK1/MKK2 and MPK4. Interacts with P.syringae type III effector HopF2. Interacts with MPK11. Post-translationally, phosphorylation at Thr-218 and Ser-224 by MAP kinase kinase kinases positively regulates kinase activity. Expressed in roots, stem, flowers and siliques.

It catalyses the reaction L-seryl-[protein] + ATP = O-phospho-L-seryl-[protein] + ADP + H(+). It carries out the reaction L-threonyl-[protein] + ATP = O-phospho-L-threonyl-[protein] + ADP + H(+). The catalysed reaction is L-tyrosyl-[protein] + ATP = O-phospho-L-tyrosyl-[protein] + ADP + H(+). Its activity is regulated as follows. Activated through serine and threonine phosphorylation in response to wounding, cold, drought, salt stresses, abscisic acid (ABA), hydrogen peroxide, bacterial flagellin and laminarin beta-glucan. Its function is as follows. MEKK1, MKK1/MKK2 and MPK4/MPK6 function in a signaling pathway that modulates the expression of genes responding to biotic and abiotic stresses and also plays an important role in pathogen defense by negatively regulating innate immunity. Activates by phosphorylation the downstream MPK4. Acts redundantly with MKK2. MKK1-MPK6 module mediates abscisic acid (ABA)-dependent CAT1 expression with H(2)O(2) production and response to drought and salt stress. MKK1-MPK6 module is also involved in sugar signaling during the process of seed germination. The chain is Mitogen-activated protein kinase kinase 1 (MKK1) from Arabidopsis thaliana (Mouse-ear cress).